Here is a 436-residue protein sequence, read N- to C-terminus: Peptidase B (436 aa).

Positions 201 and 206 each coordinate Mn(2+). Lys-213 is an active-site residue. Mn(2+)-binding residues include Asp-224, Asp-283, and Glu-285. Residue Arg-287 is part of the active site.

This sequence belongs to the peptidase M17 family. Homohexamer. Requires Mn(2+) as cofactor.

The protein localises to the cytoplasm. It catalyses the reaction Release of an N-terminal amino acid, Xaa, from a peptide or arylamide. Xaa is preferably Glu or Asp but may be other amino acids, including Leu, Met, His, Cys and Gln.. Functionally, probably plays an important role in intracellular peptide degradation. The chain is Peptidase B from Pectobacterium atrosepticum (strain SCRI 1043 / ATCC BAA-672) (Erwinia carotovora subsp. atroseptica).